Reading from the N-terminus, the 287-residue chain is ATP synthase gamma chain (287 aa).

The protein belongs to the ATPase gamma chain family. F-type ATPases have 2 components, CF(1) - the catalytic core - and CF(0) - the membrane proton channel. CF(1) has five subunits: alpha(3), beta(3), gamma(1), delta(1), epsilon(1). CF(0) has three main subunits: a, b and c.

The protein localises to the cell inner membrane. Produces ATP from ADP in the presence of a proton gradient across the membrane. The gamma chain is believed to be important in regulating ATPase activity and the flow of protons through the CF(0) complex. This is ATP synthase gamma chain from Salmonella agona (strain SL483).